A 107-amino-acid chain; its full sequence is U1-lycotoxin-Ls1t (107 aa).

Positions 1–20 are cleaved as a signal peptide; it reads MMKVLVVVALLVTLISYSSS. Positions 21 to 41 are excised as a propeptide; sequence EGIDDLEADELLSLMANEQTR. Intrachain disulfides connect Cys-44–Cys-59, Cys-51–Cys-68, Cys-58–Cys-86, and Cys-70–Cys-84.

This sequence belongs to the neurotoxin 19 (CSTX) family. 04 (U1-Lctx) subfamily. Expressed by the venom gland.

The protein localises to the secreted. The sequence is that of U1-lycotoxin-Ls1t from Lycosa singoriensis (Wolf spider).